A 323-amino-acid chain; its full sequence is Tumor-associated calcium signal transducer 2 (323 aa).

The N-terminal stretch at 1 to 26 is a signal peptide; that stretch reads MARGPGLAPPPLRLPLLLLVLAAVTG. The Extracellular portion of the chain corresponds to 27-274; it reads HTAAQDNCTC…PPKFSMKRLT (248 aa). The N-linked (GlcNAc...) asparagine glycan is linked to Asn-33. A Thyroglobulin type-1 domain is found at 70 to 145; it reads TSKCLLLKAR…TDKGDLSLRC (76 aa). Intrachain disulfides connect Cys-73/Cys-108, Cys-119/Cys-125, and Cys-127/Cys-145. Residue Asn-120 is glycosylated (N-linked (GlcNAc...) asparagine). 2 N-linked (GlcNAc...) asparagine glycosylation sites follow: Asn-168 and Asn-208. Residues 275–297 form a helical membrane-spanning segment; the sequence is AGLIAVIVVVVVALVAGMAVLVI. Topologically, residues 298–323 are cytoplasmic; that stretch reads TNRRKSGKYKKVEIKELGELRKEPSL.

Belongs to the EPCAM family. The N-terminus is blocked. Placenta, pancreatic carcinoma cell lines.

Its subcellular location is the membrane. Functionally, may function as a growth factor receptor. The chain is Tumor-associated calcium signal transducer 2 (TACSTD2) from Homo sapiens (Human).